Here is a 165-residue protein sequence, read N- to C-terminus: Hydroxyproline-rich systemin A (165 aa).

The signal sequence occupies residues 1–18; it reads MRVLFLIYLILSPFGAEA. Positions 19–35 are excised as a propeptide; it reads RTLLENHEGLNVGSGYG. Disordered regions lie at residues 33 to 70 and 142 to 165; these read GYGRGANLPPPSPASSPPSKEVSNSVSPTRTDEKTSEN and YWNRKPLSPPSPKPADGQRPLHSY. 4-hydroxyproline is present on residues proline 42, proline 43, proline 45, proline 49, and proline 50. O-linked (Ara...) hydroxyproline glycosylation is found at proline 42, proline 43, proline 45, proline 49, and proline 50. The propeptide occupies 54–143; the sequence is VSNSVSPTRT…FDSKSDERYW (90 aa). 4-hydroxyproline occurs at positions 150, 151, and 153. O-linked (Ara...) hydroxyproline glycans are attached at residues proline 150, proline 151, and proline 153. A propeptide spanning residues 162 to 165 is cleaved from the precursor; the sequence is LHSY.

O-glycosylated; contains pentose side chains. As to expression, expressed in leaves.

It is found in the secreted. Activates a lipid-based signal transduction pathway in which linolenic acid is converted to jasmonic acid, a potent activator of defense gene transcription, including proteinase inhibitors. The sequence is that of Hydroxyproline-rich systemin A from Nicotiana tabacum (Common tobacco).